The following is a 489-amino-acid chain: Corticosteroid-binding protein (489 aa).

The protein to yeast FMS1.

May be a flavoprotein with enzymatic activity. This chain is Corticosteroid-binding protein (CBP1), found in Candida albicans (strain SC5314 / ATCC MYA-2876) (Yeast).